The chain runs to 100 residues: Sec-independent protein translocase protein TatA (100 aa).

The chain crosses the membrane as a helical span at residues 1-21 (MGALKPWHIAVLVVVLILLFG). Basic and acidic residues predominate over residues 44–55 (KSLHDDDRDLAE). The interval 44–100 (KSLHDDDRDLAEKANAQAGYQPLPPQVQQEPYPQQTPYQAPPQQQPVVDPVQRARDS) is disordered. The span at 69-81 (QVQQEPYPQQTPY) shows a compositional bias: low complexity.

This sequence belongs to the TatA/E family. The Tat system comprises two distinct complexes: a TatABC complex, containing multiple copies of TatA, TatB and TatC subunits, and a separate TatA complex, containing only TatA subunits. Substrates initially bind to the TatABC complex, which probably triggers association of the separate TatA complex to form the active translocon.

Its subcellular location is the cell membrane. Part of the twin-arginine translocation (Tat) system that transports large folded proteins containing a characteristic twin-arginine motif in their signal peptide across membranes. TatA could form the protein-conducting channel of the Tat system. This chain is Sec-independent protein translocase protein TatA, found in Salinispora arenicola (strain CNS-205).